Reading from the N-terminus, the 462-residue chain is Protoheme IX farnesyltransferase, mitochondrial (462 aa).

The N-terminal 30 residues, 1–30, are a transit peptide targeting the mitochondrion; sequence MSYFPRTYAHLMRNVLAHNKGNIYLQIGTQ. Helical transmembrane passes span 158 to 178, 234 to 254, 274 to 294, 298 to 318, 352 to 372, 373 to 393, and 425 to 445; these read TILV…PASV, LIGT…VAIL, IINT…GWAA, LSHP…FPHF, YSIL…TDWY, YQID…KFYW, and FMAS…HKKG.

Belongs to the UbiA prenyltransferase family. As to quaternary structure, forms ~370 kDa homooligomeric complexes.

It is found in the mitochondrion. The protein resides in the mitochondrion membrane. The enzyme catalyses heme b + (2E,6E)-farnesyl diphosphate + H2O = Fe(II)-heme o + diphosphate. It participates in porphyrin-containing compound metabolism; heme O biosynthesis; heme O from protoheme: step 1/1. With respect to regulation, positively regulated by the hydroxylated intermediate (heme I) formed at the subsequent step, or by HAS/COX15 itself. Functionally, catalyzes the first reaction in the biosynthesis of heme A, a prosthetic group of mitochondrial cytochrome c oxidase (CcO). Heme A is synthesized from heme B by two sequential enzymatic reactions catalyzed by heme O synthase (HOS/COX10) and heme A synthase (HAS/COX15). HOS converts heme B (protoheme IX) to heme O by substitution of the vinyl group on carbon 2 of heme B porphyrin ring with a hydroxyethyl farnesyl side group. This is Protoheme IX farnesyltransferase, mitochondrial (COX10) from Saccharomyces cerevisiae (strain ATCC 204508 / S288c) (Baker's yeast).